The chain runs to 163 residues: Probable chemoreceptor glutamine deamidase CheD (163 aa).

Belongs to the CheD family.

It catalyses the reaction L-glutaminyl-[protein] + H2O = L-glutamyl-[protein] + NH4(+). Its function is as follows. Probably deamidates glutamine residues to glutamate on methyl-accepting chemotaxis receptors (MCPs), playing an important role in chemotaxis. This chain is Probable chemoreceptor glutamine deamidase CheD, found in Pyrococcus abyssi (strain GE5 / Orsay).